Consider the following 1202-residue polypeptide: Ribonuclease P protein component, mitochondrial (1202 aa).

Residues 1 to 122 (MAFKSFIYSK…NNNNNQHRYY (122 aa)) constitute a mitochondrion transit peptide. The segment at 109–134 (NYVNNNNNNQHRYYSTGPTLPTNQYD) is disordered. The segment covering 118-134 (QHRYYSTGPTLPTNQYD) has biased composition (polar residues).

Consists of an RNA moiety (RPM1) and the protein component (RPM2). Both are necessary for full enzymatic activity.

The protein resides in the mitochondrion. It carries out the reaction Endonucleolytic cleavage of RNA, removing 5'-extranucleotides from tRNA precursor.. Functionally, ribonuclease P generates mature tRNA molecules by cleaving their 5'-ends. In Saccharomyces cerevisiae (strain ATCC 204508 / S288c) (Baker's yeast), this protein is Ribonuclease P protein component, mitochondrial (RPM2).